The sequence spans 161 residues: SsrA-binding protein (161 aa).

The tract at residues 137–161 (HDKRTDSKEKDWNRDKARIMKSSLR) is disordered. Positions 139–154 (KRTDSKEKDWNRDKAR) are enriched in basic and acidic residues.

The protein belongs to the SmpB family.

The protein localises to the cytoplasm. Its function is as follows. Required for rescue of stalled ribosomes mediated by trans-translation. Binds to transfer-messenger RNA (tmRNA), required for stable association of tmRNA with ribosomes. tmRNA and SmpB together mimic tRNA shape, replacing the anticodon stem-loop with SmpB. tmRNA is encoded by the ssrA gene; the 2 termini fold to resemble tRNA(Ala) and it encodes a 'tag peptide', a short internal open reading frame. During trans-translation Ala-aminoacylated tmRNA acts like a tRNA, entering the A-site of stalled ribosomes, displacing the stalled mRNA. The ribosome then switches to translate the ORF on the tmRNA; the nascent peptide is terminated with the 'tag peptide' encoded by the tmRNA and targeted for degradation. The ribosome is freed to recommence translation, which seems to be the essential function of trans-translation. The chain is SsrA-binding protein from Aliivibrio salmonicida (strain LFI1238) (Vibrio salmonicida (strain LFI1238)).